The sequence spans 816 residues: Neuronal PAS domain-containing protein 2 (816 aa).

Over residues 1-10 (MDEDEKDRAK) the composition is skewed to basic and acidic residues. Positions 1 to 21 (MDEDEKDRAKRASRNKSEKKR) are disordered. Residues 1–61 (MDEDEKDRAK…VIGFLQKHNE (61 aa)) form a sufficient for heterodimer formation with BMAL1, E-box binding and for the effect of NADPH region. Residues 9 to 59 (AKRASRNKSEKKRRDQFNVLIKELSSMLPGNTRKMDKTTVLEKVIGFLQKH) form the bHLH domain. Residues 82 to 152 (NEEFTQLMLE…KILSSHMLVT (71 aa)) enclose the PAS 1 domain. Residues His-119 and His-171 each coordinate heme b. The region spanning 237 to 307 (FLKEMCVADE…RCHQHLMQFG (71 aa)) is the PAS 2 domain. The PAC domain maps to 311 to 354 (SCCYRFLTKGQQWIWLQTHYYITYHQWNSKPEFIVCTHSVVSYA). 4 disordered regions span residues 364–431 (LALE…STPT), 610–639 (ISAQ…SQFS), 685–705 (QPMM…RTGR), and 742–816 (PSFP…LSES). Low complexity predominate over residues 400 to 413 (SGLPSSPSPSASSR). The span at 420–431 (HTAMSEPTSTPT) shows a compositional bias: polar residues. Residues 623-639 (LLPASGRSLSSLPSQFS) show a composition bias toward low complexity. Over residues 745–759 (PASRPSPLQPAQAQQ) the composition is skewed to low complexity. Residues 780-789 (LLSTFSQQPG) are compositionally biased toward polar residues. Basic residues predominate over residues 806–816 (PSRRVSRLSES).

As to quaternary structure, component of the circadian clock oscillator which includes the CRY proteins, CLOCK or NPAS2, BMAL1 or BMAL2, CSNK1D and/or CSNK1E, TIMELESS and the PER proteins. Efficient DNA binding requires dimerization with another bHLH protein. Interacts with NCOA3, KAT2B and CREBBP. Forms a heterodimer with BMAL1 and this heterodimerization is required for E-box-dependent transactivation. Interacts with EP300. The cofactor is heme. In terms of tissue distribution, expressed in the retinal ganglion cells (at protein level). Expressed in the hypothalamic suprachiasmatic nuclei (SCN) of the brain. Also found in spinal cord, and to a lesser extent in colon, small intestine and uterus. Exhibits a diurnal variation in its expression in the brain.

Its subcellular location is the nucleus. Its activity is regulated as follows. Carbon monoxide (CO) and the redox state of the cell can modulate the transcriptional activity of the NPAS2-BMAL1 heterodimer. NADH and NADPH enhance the DNA-binding activity of the heterodimer whereas CO binds the heme group in NPAS2 and inhibits the DNA-binding activity of the heterodimer. Functionally, transcriptional activator which forms a core component of the circadian clock. The circadian clock, an internal time-keeping system, regulates various physiological processes through the generation of approximately 24 hour circadian rhythms in gene expression, which are translated into rhythms in metabolism and behavior. It is derived from the Latin roots 'circa' (about) and 'diem' (day) and acts as an important regulator of a wide array of physiological functions including metabolism, sleep, body temperature, blood pressure, endocrine, immune, cardiovascular, and renal function. Consists of two major components: the central clock, residing in the suprachiasmatic nucleus (SCN) of the brain, and the peripheral clocks that are present in nearly every tissue and organ system. Both the central and peripheral clocks can be reset by environmental cues, also known as Zeitgebers (German for 'timegivers'). The predominant Zeitgeber for the central clock is light, which is sensed by retina and signals directly to the SCN. The central clock entrains the peripheral clocks through neuronal and hormonal signals, body temperature and feeding-related cues, aligning all clocks with the external light/dark cycle. Circadian rhythms allow an organism to achieve temporal homeostasis with its environment at the molecular level by regulating gene expression to create a peak of protein expression once every 24 hours to control when a particular physiological process is most active with respect to the solar day. Transcription and translation of core clock components (CLOCK, NPAS2, BMAL1, BMAL2, PER1, PER2, PER3, CRY1 and CRY2) plays a critical role in rhythm generation, whereas delays imposed by post-translational modifications (PTMs) are important for determining the period (tau) of the rhythms (tau refers to the period of a rhythm and is the length, in time, of one complete cycle). A diurnal rhythm is synchronized with the day/night cycle, while the ultradian and infradian rhythms have a period shorter and longer than 24 hours, respectively. Disruptions in the circadian rhythms contribute to the pathology of cardiovascular diseases, cancer, metabolic syndromes and aging. A transcription/translation feedback loop (TTFL) forms the core of the molecular circadian clock mechanism. Transcription factors, CLOCK or NPAS2 and BMAL1 or BMAL2, form the positive limb of the feedback loop, act in the form of a heterodimer and activate the transcription of core clock genes and clock-controlled genes (involved in key metabolic processes), harboring E-box elements (5'-CACGTG-3') within their promoters. The core clock genes: PER1/2/3 and CRY1/2 which are transcriptional repressors form the negative limb of the feedback loop and interact with the CLOCK|NPAS2-BMAL1|BMAL2 heterodimer inhibiting its activity and thereby negatively regulating their own expression. This heterodimer also activates nuclear receptors NR1D1/2 and RORA/B/G, which form a second feedback loop and which activate and repress BMAL1 transcription, respectively. The NPAS2-BMAL1 heterodimer positively regulates the expression of MAOA, F7 and LDHA and modulates the circadian rhythm of daytime contrast sensitivity by regulating the rhythmic expression of adenylate cyclase type 1 (ADCY1) in the retina. NPAS2 plays an important role in sleep homeostasis and in maintaining circadian behaviors in normal light/dark and feeding conditions and in the effective synchronization of feeding behavior with scheduled food availability. Regulates the gene transcription of key metabolic pathways in the liver and is involved in DNA damage response by regulating several cell cycle and DNA repair genes. Controls the circadian rhythm of NR0B2 expression by binding rhythmically to its promoter. Mediates the diurnal variation in the expression of GABARA1 receptor in the brain and contributes to the regulation of anxiety-like behaviors and GABAergic neurotransmission in the ventral striatum. The chain is Neuronal PAS domain-containing protein 2 (Npas2) from Mus musculus (Mouse).